The primary structure comprises 524 residues: Importin subunit alpha-1 (524 aa).

The segment at 1–42 (MGDEFRPSHEERSKMYKSNVRDQNEMRRKRREDEVQIRKNRR) is disordered. The 59-residue stretch at 1-59 (MGDEFRPSHEERSKMYKSNVRDQNEMRRKRREDEVQIRKNRRDEKFERNRQITVQRSLS) folds into the IBB domain.

It belongs to the importin alpha family. Forms a complex with an importin beta subunit. In terms of tissue distribution, adult germline tissues.

It localises to the cytoplasm. Its function is as follows. Binds specifically and directly to substrates containing either a simple or bipartite NLS motif. Promotes docking of import substrates to the nuclear envelope. Seems to act as a cytosolic receptor for both simple and bipartite NLS motifs. In Caenorhabditis elegans, this protein is Importin subunit alpha-1 (ima-1).